Here is a 605-residue protein sequence, read N- to C-terminus: Phosphoenolpyruvate carboxykinase (ATP) (605 aa).

Residues 27-48 (SGPSSSFINNNNSNNNNNKSSN) are compositionally biased toward low complexity. Residues 27 to 67 (SGPSSSFINNNNSNNNNNKSSNMFNHDHVNKTNLHPGGVKP) form a disordered region. Residue 307-314 (GLSGTGKT) coordinates ATP.

This sequence belongs to the phosphoenolpyruvate carboxykinase (ATP) family.

The enzyme catalyses oxaloacetate + ATP = phosphoenolpyruvate + ADP + CO2. Its pathway is carbohydrate biosynthesis; gluconeogenesis. The protein is Phosphoenolpyruvate carboxykinase (ATP) (acu-6) of Neurospora crassa (strain ATCC 24698 / 74-OR23-1A / CBS 708.71 / DSM 1257 / FGSC 987).